Reading from the N-terminus, the 435-residue chain is tRNA-2-methylthio-N(6)-dimethylallyladenosine synthase (435 aa).

The region spanning 2-117 is the MTTase N-terminal domain; the sequence is KKASIITYGC…IPQAIEKIEN (116 aa). Cys11, Cys47, Cys80, Cys154, Cys158, and Cys161 together coordinate [4Fe-4S] cluster. The 231-residue stretch at 140 to 370 folds into the Radical SAM core domain; it reads FGSDQTASIS…MEVQNKCSFY (231 aa). One can recognise a TRAM domain in the interval 373–435; sequence SKYKGRIVKV…KTWTLYGEIV (63 aa).

It belongs to the methylthiotransferase family. MiaB subfamily. As to quaternary structure, monomer. Requires [4Fe-4S] cluster as cofactor.

It is found in the cytoplasm. It catalyses the reaction N(6)-dimethylallyladenosine(37) in tRNA + (sulfur carrier)-SH + AH2 + 2 S-adenosyl-L-methionine = 2-methylsulfanyl-N(6)-dimethylallyladenosine(37) in tRNA + (sulfur carrier)-H + 5'-deoxyadenosine + L-methionine + A + S-adenosyl-L-homocysteine + 2 H(+). Its function is as follows. Catalyzes the methylthiolation of N6-(dimethylallyl)adenosine (i(6)A), leading to the formation of 2-methylthio-N6-(dimethylallyl)adenosine (ms(2)i(6)A) at position 37 in tRNAs that read codons beginning with uridine. The chain is tRNA-2-methylthio-N(6)-dimethylallyladenosine synthase from Fusobacterium nucleatum subsp. nucleatum (strain ATCC 25586 / DSM 15643 / BCRC 10681 / CIP 101130 / JCM 8532 / KCTC 2640 / LMG 13131 / VPI 4355).